Here is a 425-residue protein sequence, read N- to C-terminus: Kynurenine/alpha-aminoadipate aminotransferase, mitochondrial (425 aa).

The N-terminal 29 residues, 1 to 29, are a transit peptide targeting the mitochondrion; sequence MNYSRFLTATSLARKTSPIRATVEIMSRA. R20 is a binding site for substrate. Position 40 is a phosphoserine (S40). 2 residues coordinate substrate: Y74 and Y142. At K172 the chain carries N6-succinyllysine. At K179 the chain carries N6-acetyllysine. The span at 179 to 188 shows a compositional bias: basic and acidic residues; sequence KPEDSKDPTK. The segment at 179 to 208 is disordered; it reads KPEDSKDPTKRTPKFLYTIPNGNNPTGNSL. Positions 198-208 are enriched in polar residues; sequence PNGNNPTGNSL. Residue N202 coordinates substrate. K263 carries the post-translational modification N6-(pyridoxal phosphate)lysine; alternate. 2 positions are modified to N6-acetyllysine; alternate: K263 and K339. K263 and K339 each carry N6-succinyllysine; alternate. The residue at position 351 (K351) is an N6-acetyllysine. Residue K367 is modified to N6-acetyllysine; alternate. K367 is subject to N6-succinyllysine; alternate. R399 serves as a coordination point for substrate. K422 is modified (N6-acetyllysine).

This sequence belongs to the class-I pyridoxal-phosphate-dependent aminotransferase family. In terms of assembly, homodimer. The cofactor is pyridoxal 5'-phosphate. Post-translationally, the N-terminus is blocked.

The protein resides in the mitochondrion. It catalyses the reaction L-kynurenine + 2-oxoglutarate = kynurenate + L-glutamate + H2O. The enzyme catalyses L-2-aminoadipate + 2-oxoglutarate = 2-oxoadipate + L-glutamate. The catalysed reaction is glycine + 2-oxoglutarate = glyoxylate + L-glutamate. It carries out the reaction L-kynurenine + glyoxylate = kynurenate + glycine + H2O. It catalyses the reaction 3-hydroxy-L-kynurenine + glyoxylate = xanthurenate + glycine + H2O. The enzyme catalyses 2-oxohexanoate + L-kynurenine = L-2-aminohexanoate + kynurenate + H2O. The catalysed reaction is 3-phenylpyruvate + L-kynurenine = kynurenate + L-phenylalanine + H2O. It carries out the reaction 4-methylsulfanyl-2-oxobutanoate + L-kynurenine = kynurenate + L-methionine + H2O. It catalyses the reaction 2-oxo-3-sulfanylpropanoate + L-kynurenine = kynurenate + L-cysteine + H2O. The enzyme catalyses indole-3-pyruvate + L-kynurenine = kynurenate + L-tryptophan + H2O. The catalysed reaction is 2-oxopentanoate + L-kynurenine = L-2-aminopentanoate + kynurenate + H2O. It carries out the reaction 4-methyl-2-oxopentanoate + L-kynurenine = kynurenate + L-leucine + H2O. It catalyses the reaction glyoxylate + L-methionine = 4-methylsulfanyl-2-oxobutanoate + glycine. The enzyme catalyses L-2-aminoadipate + glyoxylate = 2-oxoadipate + glycine. The catalysed reaction is L-tyrosine + glyoxylate = 3-(4-hydroxyphenyl)pyruvate + glycine. It carries out the reaction glyoxylate + L-phenylalanine = 3-phenylpyruvate + glycine. It catalyses the reaction L-tryptophan + glyoxylate = indole-3-pyruvate + glycine. The enzyme catalyses L-leucine + glyoxylate = 4-methyl-2-oxopentanoate + glycine. The catalysed reaction is 2-oxobutanoate + L-kynurenine = (2S)-2-aminobutanoate + kynurenate + H2O. It carries out the reaction 2-oxoadipate + L-kynurenine = L-2-aminoadipate + kynurenate + H2O. It catalyses the reaction 2-oxoadipate + L-kynurenine = 4-(2-aminophenyl)-2,4-dioxobutanoate + L-2-aminoadipate. It functions in the pathway amino-acid degradation; L-lysine degradation via saccharopine pathway; glutaryl-CoA from L-lysine: step 4/6. Its function is as follows. Transaminase with broad substrate specificity. Has transaminase activity towards aminoadipate, kynurenine, methionine and glutamate. Shows activity also towards tryptophan, aspartate and hydroxykynurenine. Accepts a variety of oxo-acids as amino-group acceptors, with a preference for 2-oxoglutarate, 2-oxocaproic acid, phenylpyruvate and alpha-oxo-gamma-methiol butyric acid. Can also use glyoxylate as amino-group acceptor (in vitro). The sequence is that of Kynurenine/alpha-aminoadipate aminotransferase, mitochondrial from Rattus norvegicus (Rat).